The primary structure comprises 288 residues: Urease accessory protein UreD (288 aa).

The protein belongs to the UreD family. In terms of assembly, ureD, UreF and UreG form a complex that acts as a GTP-hydrolysis-dependent molecular chaperone, activating the urease apoprotein by helping to assemble the nickel containing metallocenter of UreC. The UreE protein probably delivers the nickel.

It localises to the cytoplasm. Its function is as follows. Required for maturation of urease via the functional incorporation of the urease nickel metallocenter. This chain is Urease accessory protein UreD, found in Dechloromonas aromatica (strain RCB).